A 406-amino-acid chain; its full sequence is 3-isopropylmalate dehydrogenase, chloroplastic (406 aa).

The transit peptide at 1-34 (MAAALQTNIRPVKFPATLRALTKQSSPAPFRVRC) directs the protein to the chloroplast. Phosphoserine is present on S71. Residue 117–130 (GYKWDKNEKHLKPE) participates in NAD(+) binding. Positions 137, 147, 175, and 265 each coordinate substrate. Residues D265, D289, and D293 each coordinate Mg(2+). 323 to 335 (GSAPDIAGQDKAN) contacts NAD(+).

It belongs to the isocitrate and isopropylmalate dehydrogenases family. As to quaternary structure, homodimer. It depends on Mg(2+) as a cofactor. The cofactor is Mn(2+).

The protein localises to the plastid. It localises to the chloroplast. The enzyme catalyses (2R,3S)-3-isopropylmalate + NAD(+) = 4-methyl-2-oxopentanoate + CO2 + NADH. Its pathway is amino-acid biosynthesis; L-leucine biosynthesis; L-leucine from 3-methyl-2-oxobutanoate: step 3/4. Catalyzes the oxidation of 3-carboxy-2-hydroxy-4-methylpentanoate (3-isopropylmalate) to 3-carboxy-4-methyl-2-oxopentanoate. The product decarboxylates to 4-methyl-2 oxopentanoate. This Brassica napus (Rape) protein is 3-isopropylmalate dehydrogenase, chloroplastic.